A 429-amino-acid chain; its full sequence is Phosphoglucosamine mutase (429 aa).

The active-site Phosphoserine intermediate is the serine 96. Residues serine 96, aspartate 230, aspartate 232, and aspartate 234 each coordinate Mg(2+). Serine 96 is modified (phosphoserine).

Belongs to the phosphohexose mutase family. Mg(2+) serves as cofactor. Activated by phosphorylation.

It catalyses the reaction alpha-D-glucosamine 1-phosphate = D-glucosamine 6-phosphate. Functionally, catalyzes the conversion of glucosamine-6-phosphate to glucosamine-1-phosphate. This Thermotoga petrophila (strain ATCC BAA-488 / DSM 13995 / JCM 10881 / RKU-1) protein is Phosphoglucosamine mutase.